We begin with the raw amino-acid sequence, 82 residues long: Myosin light chain alkali (82 aa).

The EF-hand domain occupies 7–42; sequence GCYEDFIECLKLYDKEENGTMMLAELQHALLALGES.

As to quaternary structure, myosin is a hexamer of 2 heavy chains and 4 light chains.

The protein is Myosin light chain alkali (Mlc1) of Drosophila mauritiana (Fruit fly).